The primary structure comprises 199 residues: Protein-methionine-sulfoxide reductase heme-binding subunit MsrQ (199 aa).

The next 4 helical transmembrane spans lie at 10-30 (WLKV…FWAI), 82-102 (LWCF…ELGI), 116-136 (PYLT…LTST), and 153-173 (VVYL…KILS).

This sequence belongs to the MsrQ family. As to quaternary structure, heterodimer of a catalytic subunit (MsrP) and a heme-binding subunit (MsrQ). The cofactor is FMN. Requires heme b as cofactor.

The protein resides in the cell inner membrane. In terms of biological role, part of the MsrPQ system that repairs oxidized periplasmic proteins containing methionine sulfoxide residues (Met-O), using respiratory chain electrons. Thus protects these proteins from oxidative-stress damage caused by reactive species of oxygen and chlorine generated by the host defense mechanisms. MsrPQ is essential for the maintenance of envelope integrity under bleach stress, rescuing a wide series of structurally unrelated periplasmic proteins from methionine oxidation, including the primary periplasmic chaperone SurA and the lipoprotein Pal. MsrQ provides electrons for reduction to the reductase catalytic subunit MsrP, using the quinone pool of the respiratory chain. The sequence is that of Protein-methionine-sulfoxide reductase heme-binding subunit MsrQ from Salmonella dublin (strain CT_02021853).